Reading from the N-terminus, the 289-residue chain is Shikimate kinase (289 aa).

84 to 94 (PVASGLSSSSA) lines the ATP pocket.

This sequence belongs to the GHMP kinase family. Archaeal shikimate kinase subfamily.

The protein localises to the cytoplasm. The enzyme catalyses shikimate + ATP = 3-phosphoshikimate + ADP + H(+). It participates in metabolic intermediate biosynthesis; chorismate biosynthesis; chorismate from D-erythrose 4-phosphate and phosphoenolpyruvate: step 5/7. This chain is Shikimate kinase (aroK), found in Methanothermobacter thermautotrophicus (strain ATCC 29096 / DSM 1053 / JCM 10044 / NBRC 100330 / Delta H) (Methanobacterium thermoautotrophicum).